A 110-amino-acid chain; its full sequence is Thioredoxin Asp f 29 (110 aa).

One can recognise a Thioredoxin domain in the interval Met1–Ala110. Catalysis depends on nucleophile residues Cys34 and Cys37. A disulfide bond links Cys34 and Cys37.

This sequence belongs to the thioredoxin family.

In terms of biological role, participates in various redox reactions through the reversible oxidation of its active center dithiol to a disulfide and catalyzes dithiol-disulfide exchange reactions. The sequence is that of Thioredoxin Asp f 29 from Aspergillus fumigatus (Neosartorya fumigata).